Here is a 367-residue protein sequence, read N- to C-terminus: Glutamate 5-kinase (367 aa).

Lys10 is an ATP binding site. Residues Asp137 and Asn149 each coordinate substrate. ATP is bound by residues 169–170 (TD) and 211–217 (TGGMATK). In terms of domain architecture, PUA spans 275–353 (AGEITVDDGA…QQISEILGYE (79 aa)).

The protein belongs to the glutamate 5-kinase family.

It is found in the cytoplasm. The enzyme catalyses L-glutamate + ATP = L-glutamyl 5-phosphate + ADP. It functions in the pathway amino-acid biosynthesis; L-proline biosynthesis; L-glutamate 5-semialdehyde from L-glutamate: step 1/2. In terms of biological role, catalyzes the transfer of a phosphate group to glutamate to form L-glutamate 5-phosphate. This Yersinia pestis bv. Antiqua (strain Antiqua) protein is Glutamate 5-kinase.